The following is a 362-amino-acid chain: Mannan endo-1,4-beta-mannosidase (362 aa).

A signal peptide spans 1 to 26 (MFKKHTISLLIIFLLASAVLAKPIEA). The region spanning 38–349 (QTTKTVMNWL…YHDSWTLNKG (312 aa)) is the GH26 domain. His131 is a substrate binding site. The Proton donor role is filled by Glu193. Trp198 and Tyr268 together coordinate substrate. Glu292 serves as the catalytic Nucleophile. 324–325 (WN) lines the substrate pocket.

Belongs to the glycosyl hydrolase 26 family. As to quaternary structure, homodimer.

The protein resides in the secreted. It carries out the reaction Random hydrolysis of (1-&gt;4)-beta-D-mannosidic linkages in mannans, galactomannans and glucomannans.. Functionally, involved in the degradation of glucomannan. Catalyzes the endo hydrolysis of beta-1,4-linked mannan, galactomannan and glucomannan. The sequence is that of Mannan endo-1,4-beta-mannosidase from Bacillus subtilis (strain 168).